The sequence spans 235 residues: N-alpha-acetyltransferase 10 (235 aa).

Methionine 1 carries the N-acetylmethionine modification. The segment at 1–58 (MNIRNARPEDLMNMQHCNLLCLPENYQMKYYFYHGLSWPQLSYIAEDENGKIVGYVLA) is interaction with NAA15. The N-acetyltransferase domain maps to 1-152 (MNIRNARPED…DAYAMKRDLT (152 aa)). Lysine 136 is modified (N6-acetyllysine; by autocatalysis). Residues 178–235 (NKVESKGNSPPSSGEACREEKGLAAEDSGGDSKDLSEVSETTESTDVKDSSEASDSAS) are disordered. Serine 182, serine 186, and serine 205 each carry phosphoserine. The span at 193–213 (ACREEKGLAAEDSGGDSKDLS) shows a compositional bias: basic and acidic residues. Phosphoserine; by IKKB is present on serine 209. A phosphoserine mark is found at serine 213 and serine 216.

This sequence belongs to the acetyltransferase family. ARD1 subfamily. As to quaternary structure, component of the N-terminal acetyltransferase A complex (also called the NatA complex) composed of NAA10 and NAA15. Within the complex interacts with NAA15. Component of the N-terminal acetyltransferase A (NatA)/HYPK complex at least composed of NAA10, NAA15 and HYPK, which has N-terminal acetyltransferase activity. In complex with NAA15, interacts with HYPK. Component of the N-terminal acetyltransferase E (NatE) complex at least composed of NAA10, NAA15 and NAA50. Within the complex interacts with NAA15; the interaction is required for binding to NAAT50. Interacts with NAAT50. The interaction of the NatA complex with NAA50 reduces the acetylation activity of the NatA complex. Component of the N-terminal acetyltransferase E (NatE)/HYPK complex at least composed of NAA10, NAA15, NAA50 and HYPK. In complex with NAA15, interacts with HYPK; the interaction with HYPK reduces the capacity of the NatA complex to interact with NAA50. Interacts with HIF1A (via its ODD domain); the interaction increases HIF1A protein stability during normoxia, an down-regulates it when induced by hypoxia. Interacts with the ribosome. Binds to MYLK. Interacts with NAA16. Interacts (via its C-terminal domain) with TSC2, leading to its acetylation. Interacts with IKBKB. Interacts with HSPA1A and HSPA1B leading to its acetylation. In terms of processing, cleaved by caspases during apoptosis. Phosphorylation by IKBKB/IKKB at Ser-209 promotes its proteasome-mediated degradation. Post-translationally, autoacetylated at Lys-136 which stimulates its catalytic activity. In terms of tissue distribution, ubiquitous.

The protein localises to the cytoplasm. It localises to the nucleus. The enzyme catalyses N-terminal glycyl-[protein] + acetyl-CoA = N-terminal N(alpha)-acetylglycyl-[protein] + CoA + H(+). It catalyses the reaction N-terminal L-alanyl-[protein] + acetyl-CoA = N-terminal N(alpha)-acetyl-L-alanyl-[protein] + CoA + H(+). It carries out the reaction N-terminal L-seryl-[protein] + acetyl-CoA = N-terminal N(alpha)-acetyl-L-seryl-[protein] + CoA + H(+). The catalysed reaction is N-terminal L-valyl-[protein] + acetyl-CoA = N-terminal N(alpha)-acetyl-L-valyl-[protein] + CoA + H(+). The enzyme catalyses N-terminal L-cysteinyl-[protein] + acetyl-CoA = N-terminal N(alpha)-acetyl-L-cysteinyl-[protein] + CoA + H(+). It catalyses the reaction N-terminal L-threonyl-[protein] + acetyl-CoA = N-terminal N(alpha)-acetyl-L-threonyl-[protein] + CoA + H(+). Its function is as follows. Catalytic subunit of N-terminal acetyltransferase complexes which display alpha (N-terminal) acetyltransferase activity. Acetylates amino termini that are devoid of initiator methionine. The alpha (N-terminal) acetyltransferase activity may be important for vascular, hematopoietic and neuronal growth and development. Without NAA15, displays epsilon (internal) acetyltransferase activity towards HIF1A, thereby promoting its degradation. Represses MYLK kinase activity by acetylation, and thus represses tumor cell migration. Acetylates, and stabilizes TSC2, thereby repressing mTOR activity and suppressing cancer development. Acetylates HSPA1A and HSPA1B at 'Lys-77' which enhances its chaperone activity and leads to preferential binding to co-chaperone HOPX. Acetylates HIST1H4A. Acts as a negative regulator of sister chromatid cohesion during mitosis. The sequence is that of N-alpha-acetyltransferase 10 (NAA10) from Homo sapiens (Human).